The primary structure comprises 300 residues: Cation-efflux pump FieF (300 aa).

A run of 4 helical transmembrane segments spans residues 12–32, 39–59, 82–102, and 114–134; these read AAIA…FAWW, ILAA…NLLV, AALA…LTGI, and PGVG…LVSF. Zn(2+) is bound by residues D45 and D49. Zn(2+) contacts are provided by H153 and D157. Transmembrane regions (helical) follow at residues 156–176 and 178–198; these read SDVM…YGWH and ADAL…LRMG.

This sequence belongs to the cation diffusion facilitator (CDF) transporter (TC 2.A.4) family. FieF subfamily. As to quaternary structure, homodimer.

Its subcellular location is the cell inner membrane. It carries out the reaction Zn(2+)(in) + H(+)(out) = Zn(2+)(out) + H(+)(in). The catalysed reaction is Cd(2+)(in) + H(+)(out) = Cd(2+)(out) + H(+)(in). It catalyses the reaction Fe(2+)(in) + H(+)(out) = Fe(2+)(out) + H(+)(in). Divalent metal cation transporter which exports Zn(2+), Cd(2+) and possibly Fe(2+). May be involved in zinc and iron detoxification by efflux. In Shigella boydii serotype 18 (strain CDC 3083-94 / BS512), this protein is Cation-efflux pump FieF.